Here is a 1338-residue protein sequence, read N- to C-terminus: Serine/threonine-protein kinase cek1 (1338 aa).

The PAS domain maps to 28–98 (SKDENLQPSI…RAVNCLLKDD (71 aa)). The tract at residues 484-554 (PDFAIGSPMS…GRSSLFSRGR (71 aa)) is disordered. Positions 491-501 (PMSQDSSNYSS) are enriched in polar residues. Residue Ser525 is modified to Phosphoserine. Positions 541–550 (PASNGRSSLF) are enriched in polar residues. In terms of domain architecture, Protein kinase spans 589–958 (YKILKPISKG…VEEIKAHPFF (370 aa)). Residues 595-603 (ISKGAFGSV) and Lys618 contribute to the ATP site. The Proton acceptor role is filled by Asp713. Phosphoserine is present on Ser748. The span at 813 to 842 (ENSAEDSPTATNTPTSQVDESNIFRSTDSP) shows a compositional bias: polar residues. 3 disordered regions span residues 813-844 (ENSA…SPRV), 1010-1035 (KLEE…LRSN), and 1159-1185 (SSTM…TSSD). Residues 959–1057 (KSVNWDTILE…RNLDFLNKAN (99 aa)) form the AGC-kinase C-terminal domain. Low complexity predominate over residues 1159–1174 (SSTMSASQSQSSMHTA). Ser1211 is modified (phosphoserine).

The protein belongs to the protein kinase superfamily. Ser/Thr protein kinase family.

It catalyses the reaction L-seryl-[protein] + ATP = O-phospho-L-seryl-[protein] + ADP + H(+). It carries out the reaction L-threonyl-[protein] + ATP = O-phospho-L-threonyl-[protein] + ADP + H(+). Its function is as follows. May facilitate the progression of anaphase through direct or indirect interaction with the cut8 protein. In Schizosaccharomyces pombe (strain 972 / ATCC 24843) (Fission yeast), this protein is Serine/threonine-protein kinase cek1 (cek1).